Consider the following 225-residue polypeptide: UPF0700 transmembrane protein RA0705 (225 aa).

6 consecutive transmembrane segments (helical) span residues 17–37 (VGLA…AIGL), 66–86 (GLLL…GVMI), 95–115 (ALLF…QPEL), 117–137 (FVSL…IEGL), 168–188 (IIQI…AVLV), and 194–214 (LALW…FQIP).

The protein belongs to the UPF0700 family.

Its subcellular location is the cell membrane. This Rhizobium meliloti (strain 1021) (Ensifer meliloti) protein is UPF0700 transmembrane protein RA0705.